An 84-amino-acid chain; its full sequence is Beta-toxin Tf1a (84 aa).

A signal peptide spans 1 to 20 (MKGMILFISCLLLIGIVVEC). The region spanning 21 to 82 (KEGYLMDHEG…VWERATNRCG (62 aa)) is the LCN-type CS-alpha/beta domain. 4 disulfide bridges follow: Cys31–Cys81, Cys35–Cys57, Cys43–Cys62, and Cys47–Cys64. Position 81 is a cysteine amide (Cys81).

Belongs to the long (4 C-C) scorpion toxin superfamily. Sodium channel inhibitor family. Beta subfamily. In terms of tissue distribution, expressed by the venom gland.

It is found in the secreted. Its function is as follows. Beta toxins bind voltage-independently at site-4 of sodium channels (Nav) and shift the voltage of activation toward more negative potentials thereby affecting sodium channel activation and promoting spontaneous and repetitive firing. The toxin induces a leftward shift, on all channels tested (including Blattella germanica and Varroa destructor Nav1), displacing a change in voltage dependence activation to more hyperpolarized potentials. In addition, the toxin mostly inhibits peak current of hNav1.4/SCN4A (53% inhibition of peak current at 100 nM) and hNav1.5/SCN5A (71% inhibition). The polypeptide is Beta-toxin Tf1a (Tityus fasciolatus (Central Brazilian scorpion)).